We begin with the raw amino-acid sequence, 660 residues long: DNA mismatch repair protein MutL (660 aa).

The protein belongs to the DNA mismatch repair MutL/HexB family.

Its function is as follows. This protein is involved in the repair of mismatches in DNA. It is required for dam-dependent methyl-directed DNA mismatch repair. May act as a 'molecular matchmaker', a protein that promotes the formation of a stable complex between two or more DNA-binding proteins in an ATP-dependent manner without itself being part of a final effector complex. In Streptococcus pyogenes serotype M1, this protein is DNA mismatch repair protein MutL.